The primary structure comprises 644 residues: Threonine--tRNA ligase (644 aa).

Positions 1 to 61 (MVAITLPDGS…VADAKVEIVT (61 aa)) constitute a TGS domain. The catalytic stretch occupies residues 242–533 (DHRKIGKALN…LIENYAGWMP (292 aa)). Zn(2+) is bound by residues Cys-333, His-384, and His-510.

It belongs to the class-II aminoacyl-tRNA synthetase family. Homodimer. Requires Zn(2+) as cofactor.

It localises to the cytoplasm. It catalyses the reaction tRNA(Thr) + L-threonine + ATP = L-threonyl-tRNA(Thr) + AMP + diphosphate + H(+). Its function is as follows. Catalyzes the attachment of threonine to tRNA(Thr) in a two-step reaction: L-threonine is first activated by ATP to form Thr-AMP and then transferred to the acceptor end of tRNA(Thr). Also edits incorrectly charged L-seryl-tRNA(Thr). The polypeptide is Threonine--tRNA ligase (Psychrobacter arcticus (strain DSM 17307 / VKM B-2377 / 273-4)).